Reading from the N-terminus, the 393-residue chain is Serine/threonine-protein phosphatase 2A activator 1 (393 aa).

The disordered stretch occupies residues 328–393 (EKEEESIEQA…TSFSRDRLRR (66 aa)). 2 stretches are compositionally biased toward polar residues: residues 335–356 (EQAN…TSTS) and 365–386 (SGNN…QTSF). At Ser341 the chain carries Phosphoserine.

It belongs to the PTPA-type PPIase family. Interacts with the phosphatase PP2A-like catalytic subunits PPG1, PPH3 and SIT4. Forms a ternary complex with SIT4-TAP42.

It is found in the cytoplasm. The protein resides in the nucleus. The enzyme catalyses [protein]-peptidylproline (omega=180) = [protein]-peptidylproline (omega=0). Functionally, PPIases accelerate the folding of proteins. It catalyzes the cis-trans isomerization of proline imidic peptide bonds in oligopeptides. Acts as a regulatory subunit for TAP42-associated PP2A-like phosphatases modulating their activity or substrate specificity, probably by inducing a conformational change in the catalytic subunit, a direct target of the PPIase. Can reactivate inactive phosphatase PP2A-phosphatase methylesterase complexes (PP2Ai) in presence of ATP and Mg(2+) by dissociating the inactive form from the complex. Involved in the regulation of cell cycle progression, mitotic spindle formation, bud morphogenesis and DNA repair. This is Serine/threonine-protein phosphatase 2A activator 1 (RRD1) from Saccharomyces cerevisiae (strain ATCC 204508 / S288c) (Baker's yeast).